The sequence spans 1299 residues: DNA-directed RNA polymerase subunit beta' (1299 aa).

Zn(2+) is bound by residues C60, C62, C75, and C78. The segment at 385–405 (GRRGRPVTGPGNRPLKSLSDM) is disordered. Mg(2+)-binding residues include D535, D537, and D539. Positions 886, 962, 969, and 972 each coordinate Zn(2+).

Belongs to the RNA polymerase beta' chain family. The RNAP catalytic core consists of 2 alpha, 1 beta, 1 beta' and 1 omega subunit. When a sigma factor is associated with the core the holoenzyme is formed, which can initiate transcription. Mg(2+) serves as cofactor. Requires Zn(2+) as cofactor.

It catalyses the reaction RNA(n) + a ribonucleoside 5'-triphosphate = RNA(n+1) + diphosphate. Its function is as follows. DNA-dependent RNA polymerase catalyzes the transcription of DNA into RNA using the four ribonucleoside triphosphates as substrates. The sequence is that of DNA-directed RNA polymerase subunit beta' from Streptomyces avermitilis (strain ATCC 31267 / DSM 46492 / JCM 5070 / NBRC 14893 / NCIMB 12804 / NRRL 8165 / MA-4680).